The primary structure comprises 667 residues: DNA ligase (667 aa).

Residues 32–36 (DSEYD), 81–82 (SL), and Glu-110 contribute to the NAD(+) site. The N6-AMP-lysine intermediate role is filled by Lys-112. 4 residues coordinate NAD(+): Arg-133, Glu-167, Lys-283, and Lys-307. Cys-401, Cys-404, Cys-419, and Cys-424 together coordinate Zn(2+). Residues 586–667 (EGHPEFSGKT…FVDKQNELNS (82 aa)) form the BRCT domain.

Belongs to the NAD-dependent DNA ligase family. LigA subfamily. Requires Mg(2+) as cofactor. The cofactor is Mn(2+).

It catalyses the reaction NAD(+) + (deoxyribonucleotide)n-3'-hydroxyl + 5'-phospho-(deoxyribonucleotide)m = (deoxyribonucleotide)n+m + AMP + beta-nicotinamide D-nucleotide.. DNA ligase that catalyzes the formation of phosphodiester linkages between 5'-phosphoryl and 3'-hydroxyl groups in double-stranded DNA using NAD as a coenzyme and as the energy source for the reaction. It is essential for DNA replication and repair of damaged DNA. This is DNA ligase from Staphylococcus aureus (strain Mu3 / ATCC 700698).